The primary structure comprises 308 residues: uncharacterized protein (308 aa).

5 helical membrane-spanning segments follow: residues 46-66, 82-102, 159-179, 190-210, and 271-291; these read GISAGVVASVLVGCLLAGVLQ, LLAALLGAIAVGMLSWMLLWM, AAIGAALAGIGTAVVMAFLIF, FFQVMGTLLLIIVGGLVIGVL, and LYLFQAIAYGIFLSVIGSLYF.

Belongs to the oxidase-dependent Fe transporter (OFeT) (TC 9.A.10.1) family.

The protein localises to the cell membrane. This is an uncharacterized protein from Synechocystis sp. (strain ATCC 27184 / PCC 6803 / Kazusa).